The chain runs to 70 residues: DNA-directed RNA polymerase subunit epsilon (70 aa).

Belongs to the RNA polymerase subunit epsilon family. As to quaternary structure, RNAP is composed of a core of 2 alpha, a beta and a beta' subunit. The core is associated with a delta subunit, and at least one of epsilon or omega. When a sigma factor is associated with the core the holoenzyme is formed, which can initiate transcription.

It carries out the reaction RNA(n) + a ribonucleoside 5'-triphosphate = RNA(n+1) + diphosphate. Its function is as follows. A non-essential component of RNA polymerase (RNAP). This Bacillus cereus (strain ZK / E33L) protein is DNA-directed RNA polymerase subunit epsilon.